The chain runs to 77 residues: Translation initiation factor IF-1, chloroplastic (77 aa).

In terms of domain architecture, S1-like spans 1–71; it reads MKEQKWIHEG…TRGRIIYRLR (71 aa).

This sequence belongs to the IF-1 family. As to quaternary structure, component of the 30S ribosomal translation pre-initiation complex which assembles on the 30S ribosome in the order IF-2 and IF-3, IF-1 and N-formylmethionyl-tRNA(fMet); mRNA recruitment can occur at any time during PIC assembly.

It localises to the plastid. Its subcellular location is the chloroplast. In terms of biological role, one of the essential components for the initiation of protein synthesis. Stabilizes the binding of IF-2 and IF-3 on the 30S subunit to which N-formylmethionyl-tRNA(fMet) subsequently binds. Helps modulate mRNA selection, yielding the 30S pre-initiation complex (PIC). Upon addition of the 50S ribosomal subunit IF-1, IF-2 and IF-3 are released leaving the mature 70S translation initiation complex. This Antirrhinum majus (Garden snapdragon) protein is Translation initiation factor IF-1, chloroplastic.